Here is a 261-residue protein sequence, read N- to C-terminus: Small ribosomal subunit protein uS2 (261 aa).

An N-acetylserine modification is found at Ser-2. The disordered stretch occupies residues 212–261 (QNAAEEAKAEETEEAPAAEAETEWTGETDDVDWADSGATPAAEDAAASNW). Residues 222–244 (ETEEAPAAEAETEWTGETDDVDW) show a composition bias toward acidic residues.

It belongs to the universal ribosomal protein uS2 family. Component of the small ribosomal subunit. Mature ribosomes consist of a small (40S) and a large (60S) subunit. The 40S subunit contains about 33 different proteins and 1 molecule of RNA (18S). The 60S subunit contains about 49 different proteins and 3 molecules of RNA (25S, 5.8S and 5S). Interacts with RPS21.

The protein resides in the cytoplasm. Its function is as follows. Required for the assembly and/or stability of the 40S ribosomal subunit. Required for the processing of the 20S rRNA-precursor to mature 18S rRNA in a late step of the maturation of 40S ribosomal subunits. This Candida tropicalis (Yeast) protein is Small ribosomal subunit protein uS2.